The primary structure comprises 558 residues: 5-aminolevulinate synthase, mitochondrial (558 aa).

The transit peptide at Met-1–Arg-25 directs the protein to the mitochondrion. The tract at residues Thr-103–Val-124 is disordered. Substrate is bound by residues Arg-152, Ser-265, and Lys-284. Residues Ser-317, His-345, and Thr-374 each contribute to the pyridoxal 5'-phosphate site. Lys-377 is an active-site residue. Lys-377 carries the post-translational modification N6-(pyridoxal phosphate)lysine. Pyridoxal 5'-phosphate is bound by residues Thr-406 and Thr-407. Substrate is bound at residue Thr-492.

Belongs to the class-II pyridoxal-phosphate-dependent aminotransferase family. In terms of assembly, homodimer. Pyridoxal 5'-phosphate is required as a cofactor.

It is found in the mitochondrion matrix. It catalyses the reaction succinyl-CoA + glycine + H(+) = 5-aminolevulinate + CO2 + CoA. It participates in porphyrin-containing compound metabolism; protoporphyrin-IX biosynthesis; 5-aminolevulinate from glycine: step 1/1. Its function is as follows. Catalyzes the synthesis of 5-aminolevulinate (ALA) from succinyl-CoA and glycine, the first and rate-limiting step in heme biosynthesis. This is 5-aminolevulinate synthase, mitochondrial from Schizosaccharomyces pombe (strain 972 / ATCC 24843) (Fission yeast).